The sequence spans 468 residues: Monocarboxylate transporter 6 (468 aa).

Topologically, residues 1 to 13 are cytoplasmic; sequence MARALEQADGRWA. A helical membrane pass occupies residues 14-34; sequence WVVLLSSLVTQALTLGFPTCI. The Extracellular segment spans residues 35–53; sequence GVFFTDLQRDFQASNSETS. Residues 54–74 traverse the membrane as a helical segment; that stretch reads WFPSILGAMVHGGGPLCSILV. Topologically, residues 75–80 are cytoplasmic; that stretch reads KHFGCR. The chain crosses the membrane as a helical span at residues 81–101; that stretch reads VTMMLGGVLASLGMVVSTFSG. Ser102 is a topological domain (extracellular). Residues 103–122 traverse the membrane as a helical segment; that stretch reads LTHLFLTAGVITGLGMCFSF. Over 123 to 138 the chain is Cytoplasmic; sequence QSSITVVGLYFVRRRP. The chain crosses the membrane as a helical span at residues 139–159; the sequence is LANALASMGLSMGVTLWPLLA. At 160-171 the chain is on the extracellular side; sequence RYLLETLGWRGA. The chain crosses the membrane as a helical span at residues 172 to 192; the sequence is FLIFGGILLHCCVCGALLRPV. The Cytoplasmic portion of the chain corresponds to 193–239; that stretch reads ATNEVPEPKEDPLLPPKIPTRSCLATCVSTIRYHLAFDILRHNMGFC. A helical membrane pass occupies residues 240-260; the sequence is IYVTGVTWMNLGFALPHIFLV. Residues 261–274 lie on the Extracellular side of the membrane; it reads PYAMHHGVDDYWAA. The helical transmembrane segment at 275 to 295 threads the bilayer; sequence MLMSIVGFCNIFLRPMAGLLL. At 296–306 the chain is on the cytoplasmic side; that stretch reads AGRKSLAAYRK. Residues 307–327 form a helical membrane-spanning segment; the sequence is YLFAVAILINGLTNLICTVSA. The Extracellular segment spans residues 328–330; the sequence is DFR. The chain crosses the membrane as a helical span at residues 331-351; the sequence is VLLGYCLVYSLSMCGVGILVF. Residues 352–368 are Cytoplasmic-facing; sequence QVLMDIVPMDRFPSALG. A helical membrane pass occupies residues 369-389; the sequence is LFTILCGVTSLISPPLAGLLL. Over 390–396 the chain is Extracellular; sequence DKTNNFS. Residues 397-417 form a helical membrane-spanning segment; that stretch reads YVFYMSSGFLVSGSLILGVGF. The Cytoplasmic segment spans residues 418-468; the sequence is YAAEKKKLKQDGQAKMENATSEMTPMHDLTSEDKDSAKKQPYPESIYMTNV. The interval 429 to 468 is disordered; it reads GQAKMENATSEMTPMHDLTSEDKDSAKKQPYPESIYMTNV. Residues 446–455 are compositionally biased toward basic and acidic residues; sequence LTSEDKDSAK.

This sequence belongs to the major facilitator superfamily. Monocarboxylate porter (TC 2.A.1.13) family.

The protein resides in the cell membrane. Proton-linked monocarboxylate transporter. Catalyzes the rapid transport across the plasma membrane of many monocarboxylates such as lactate, pyruvate, branched-chain oxo acids derived from leucine, valine and isoleucine, and the ketone bodies acetoacetate, beta-hydroxybutyrate and acetate. This chain is Monocarboxylate transporter 6 (Slc16a5), found in Mus musculus (Mouse).